A 141-amino-acid chain; its full sequence is Nucleoside diphosphate kinase (141 aa).

Residues Lys-11, Phe-59, Arg-87, Thr-93, Arg-104, and Asn-114 each contribute to the ATP site. Residue His-117 is the Pros-phosphohistidine intermediate of the active site.

The protein belongs to the NDK family. As to quaternary structure, homotetramer. The cofactor is Mg(2+).

The protein resides in the cytoplasm. It carries out the reaction a 2'-deoxyribonucleoside 5'-diphosphate + ATP = a 2'-deoxyribonucleoside 5'-triphosphate + ADP. It catalyses the reaction a ribonucleoside 5'-diphosphate + ATP = a ribonucleoside 5'-triphosphate + ADP. Functionally, major role in the synthesis of nucleoside triphosphates other than ATP. The ATP gamma phosphate is transferred to the NDP beta phosphate via a ping-pong mechanism, using a phosphorylated active-site intermediate. The sequence is that of Nucleoside diphosphate kinase from Pseudomonas fluorescens (strain Pf0-1).